Consider the following 175-residue polypeptide: ATP-dependent protease subunit HslV (175 aa).

Residue threonine 2 is part of the active site. 3 residues coordinate Na(+): glycine 157, cysteine 160, and threonine 163.

The protein belongs to the peptidase T1B family. HslV subfamily. A double ring-shaped homohexamer of HslV is capped on each side by a ring-shaped HslU homohexamer. The assembly of the HslU/HslV complex is dependent on binding of ATP.

The protein localises to the cytoplasm. It catalyses the reaction ATP-dependent cleavage of peptide bonds with broad specificity.. With respect to regulation, allosterically activated by HslU binding. Protease subunit of a proteasome-like degradation complex believed to be a general protein degrading machinery. The chain is ATP-dependent protease subunit HslV from Photobacterium profundum (strain SS9).